Here is an 899-residue protein sequence, read N- to C-terminus: Putative lipoxygenase 5 (899 aa).

3 disordered regions span residues 15 to 34, 48 to 68, and 258 to 291; these read AGSRGMGKGASRRRTARSTA, APVEQQRGAGRPEAHPQSVAA, and VASARPVLGGEQMPYPRRMRTGRPSTATDASAES. In terms of domain architecture, PLAT spans 68–204; that stretch reads ARAVVTVRRR…VSRDRRVFFS (137 aa). The region spanning 207-899 is the Lipoxygenase domain; sequence PYLPSETPPG…CRGVPNSVTI (693 aa). Fe cation-binding residues include H559, H564, H751, N755, and I899.

This sequence belongs to the lipoxygenase family. The cofactor is Fe cation.

It carries out the reaction (9Z,12Z)-octadecadienoate + O2 = (13S)-hydroperoxy-(9Z,11E)-octadecadienoate. It catalyses the reaction (9Z,12Z,15Z)-octadecatrienoate + O2 = (13S)-hydroperoxy-(9Z,11E,15Z)-octadecatrienoate. It participates in lipid metabolism; oxylipin biosynthesis. In terms of biological role, plant lipoxygenase may be involved in a number of diverse aspects of plant physiology including growth and development, pest resistance, and senescence or responses to wounding. Catalyzes the hydroperoxidation of lipids containing a cis,cis-1,4-pentadiene structure. The sequence is that of Putative lipoxygenase 5 from Oryza sativa subsp. japonica (Rice).